The following is a 151-amino-acid chain: Group 10 secretory phospholipase A2 (151 aa).

Positions 1-17 are cleaved as a signal peptide; sequence MLLLLLLLLLGPGPGFS. The propeptide occupies 18–28; sequence EATRRSHVYKR. Intrachain disulfides connect C39–C97, C53–C143, C55–C71, C70–C125, C76–C150, C77–C118, C86–C111, and C104–C116. Y54, G56, and G58 together coordinate Ca(2+). H74 is a catalytic residue. D75 is a binding site for Ca(2+). Residue D119 is part of the active site.

The protein belongs to the phospholipase A2 family. As to quaternary structure, interacts with PLA2R1; this interaction mediates PLA2G10 clearance and inactivation. Requires Ca(2+) as cofactor. In terms of tissue distribution, expressed at high levels in testis and the gastrointestinal tract including stomach and colon. Expressed at lower levels in other tissues including small intestine, uterus, oviduct, lung, thymus, spleen and brain. Expressed in Paneth-like secretory epithelial cells of the colon. Expressed in gastric and ileac epithelial cells and in glandular epithelium of intestinal mucosa (at protein level). Expressed in late spermatogenic cells, spermatocytes and spermatids, but not spermatogonia in seminiferous tubules (at protein level). Expressed mainly in the apical side of endometrial epithelial cells and in the interstitium beneath the epithelium of uterus (at protein level). Expressed in resident spleen macrophages (at protein level). Expressed at outermost layer of hair follicles. Expressed in dorsal root ganglia in both NEFH-positive A-fibers and PRPH-positive C-fibers (at protein level).

The protein resides in the secreted. It is found in the lysosome. The protein localises to the cytoplasmic vesicle. Its subcellular location is the secretory vesicle. It localises to the acrosome. The enzyme catalyses a 1,2-diacyl-sn-glycero-3-phosphocholine + H2O = a 1-acyl-sn-glycero-3-phosphocholine + a fatty acid + H(+). The catalysed reaction is 1-hexadecanoyl-2-(9Z-octadecenoyl)-sn-glycero-3-phosphocholine + H2O = 1-hexadecanoyl-sn-glycero-3-phosphocholine + (9Z)-octadecenoate + H(+). It carries out the reaction 1-octadecanoyl-2-(5Z,8Z,11Z,14Z-eicosatetraenoyl)-sn-glycero-3-phosphocholine + H2O = 1-octadecanoyl-sn-glycero-3-phosphocholine + (5Z,8Z,11Z,14Z)-eicosatetraenoate + H(+). It catalyses the reaction 1,2-dihexadecanoyl-sn-glycero-3-phosphocholine + H2O = 1-hexadecanoyl-sn-glycero-3-phosphocholine + hexadecanoate + H(+). The enzyme catalyses 1-hexadecanoyl-2-(9Z-octadecenoyl)-sn-glycero-3-phosphoglycerol + H2O = 1-hexadecanoyl-sn-glycero-3-phosphoglycerol + (9Z)-octadecenoate + H(+). The catalysed reaction is 1,2-dihexadecanoyl-sn-glycero-3-phospho-(1'-sn-glycerol) + H2O = 1-hexadecanoyl-sn-glycero-3-phospho-(1'-sn-glycerol) + hexadecanoate + H(+). It carries out the reaction 1-hexadecanoyl-2-(9Z-octadecenoyl)-sn-glycero-3-phospho-L-serine + H2O = 1-hexadecanoyl-sn-glycero-3-phospho-L-serine + (9Z)-octadecenoate + H(+). It catalyses the reaction 1-hexadecanoyl-2-(9Z,12Z-octadecadienoyl)-sn-glycero-3-phosphoethanolamine + H2O = 1-hexadecanoyl-sn-glycero-3-phosphoethanolamine + (9Z,12Z)-octadecadienoate + H(+). The enzyme catalyses 1-hexadecanoyl-2-(9Z-octadecenoyl)-sn-glycero-3-phosphate + H2O = 1-hexadecanoyl-sn-glycero-3-phosphate + (9Z)-octadecenoate + H(+). The catalysed reaction is 1-O-hexadecyl-2-acetyl-sn-glycero-3-phosphocholine + H2O = 1-O-hexadecyl-sn-glycero-3-phosphocholine + acetate + H(+). In terms of biological role, secretory calcium-dependent phospholipase A2 that primarily targets extracellular phospholipids. Hydrolyzes the ester bond of the fatty acyl group attached at sn-2 position of phospholipids with preference for phosphatidylcholines and phosphatidylglycerols over phosphatidylethanolamines. Preferentially releases sn-2 omega-6 and omega-3 polyunsaturated fatty acyl (PUFA) chains over saturated fatty acyls. Contributes to phospholipid remodeling of very low-density lipoprotein (VLDL), low-density lipoprotein (LDL) and high-density lipoprotein (HDL) particles. Hydrolyzes LDL phospholipids releasing unsaturated fatty acids that regulate macrophage differentiation toward foam cells. Efficiently hydrolyzes and inactivates PAF, a potent lipid mediator present in oxidized LDL. May act in an autocrine and paracrine manner. Secreted by lung epithelium, targets membrane phospholipids of infiltrating eosinophils, releasing arachidonate and boosting eicosanoid and cysteinyl leukotriene synthesis involved in airway inflammatory response. Secreted by gut epithelium, hydrolyzes dietary and biliary phosphatidylcholines in the gastrointestinal lumen, thereby regulating adipogenesis and body weight. Plays a stem cell regulator role in colon epithelium. Within intracellular compartment, mediates Paneth-like cell differentiation and its stem cell supporting functions by inhibiting Wnt signaling pathway in intestinal stem cell (ISC). Secreted in the intestinal lumen upon inflammation, acts in an autocrine way and promotes prostaglandin E2 synthesis that stimulates the Wnt signaling pathway in ISCs and tissue regeneration. May participate in hair follicle morphogenesis by regulating phosphatidylethanolamines metabolism at the outermost epithelial layer and facilitating melanin synthesis. By generating lysophosphatidylcholines (LPCs) at sperm acrosome controls sperm cell capacitation, acrosome reaction and overall fertility. May promote neurite outgrowth in neuron fibers involved in nociception. Contributes to lipid remodeling of cellular membranes and generation of lipid mediators involved in pathogen clearance. Cleaves sn-2 fatty acyl chains of phosphatidylglycerols and phosphatidylethanolamines, which are major components of membrane phospholipids in bacteria. Displays bactericidal activity against Gram-positive bacteria by directly hydrolyzing phospholipids of the bacterial membrane. In pulmonary epithelium, may contribute to host defense response against adenoviral infection. Prevents adenovirus entry into host cells by hydrolyzing host cell plasma membrane, releasing C16:0 LPCs that inhibit virus-mediated membrane fusion and viral infection. Likely prevents adenoviral entry into the endosomes of host cells. May play a role in maturation and activation of innate immune cells including macrophages, group 2 innate lymphoid cells and mast cells. The polypeptide is Group 10 secretory phospholipase A2 (Pla2g10) (Mus musculus (Mouse)).